A 474-amino-acid polypeptide reads, in one-letter code: Aspartyl/glutamyl-tRNA(Asn/Gln) amidotransferase subunit B (474 aa).

It belongs to the GatB/GatE family. GatB subfamily. As to quaternary structure, heterotrimer of A, B and C subunits.

The catalysed reaction is L-glutamyl-tRNA(Gln) + L-glutamine + ATP + H2O = L-glutaminyl-tRNA(Gln) + L-glutamate + ADP + phosphate + H(+). The enzyme catalyses L-aspartyl-tRNA(Asn) + L-glutamine + ATP + H2O = L-asparaginyl-tRNA(Asn) + L-glutamate + ADP + phosphate + 2 H(+). Functionally, allows the formation of correctly charged Asn-tRNA(Asn) or Gln-tRNA(Gln) through the transamidation of misacylated Asp-tRNA(Asn) or Glu-tRNA(Gln) in organisms which lack either or both of asparaginyl-tRNA or glutaminyl-tRNA synthetases. The reaction takes place in the presence of glutamine and ATP through an activated phospho-Asp-tRNA(Asn) or phospho-Glu-tRNA(Gln). This Wolbachia sp. subsp. Brugia malayi (strain TRS) protein is Aspartyl/glutamyl-tRNA(Asn/Gln) amidotransferase subunit B.